Reading from the N-terminus, the 110-residue chain is Phosphoribosyl-AMP cyclohydrolase (110 aa).

Aspartate 80 contributes to the Mg(2+) binding site. Cysteine 81 contacts Zn(2+). Residues aspartate 82 and aspartate 84 each contribute to the Mg(2+) site. Residues cysteine 97 and cysteine 104 each contribute to the Zn(2+) site.

This sequence belongs to the PRA-CH family. In terms of assembly, homodimer. It depends on Mg(2+) as a cofactor. Zn(2+) serves as cofactor.

It localises to the cytoplasm. The catalysed reaction is 1-(5-phospho-beta-D-ribosyl)-5'-AMP + H2O = 1-(5-phospho-beta-D-ribosyl)-5-[(5-phospho-beta-D-ribosylamino)methylideneamino]imidazole-4-carboxamide. Its pathway is amino-acid biosynthesis; L-histidine biosynthesis; L-histidine from 5-phospho-alpha-D-ribose 1-diphosphate: step 3/9. Its function is as follows. Catalyzes the hydrolysis of the adenine ring of phosphoribosyl-AMP. The sequence is that of Phosphoribosyl-AMP cyclohydrolase from Clostridium botulinum (strain 657 / Type Ba4).